The sequence spans 177 residues: Nucleoside triphosphate/diphosphate phosphatase (177 aa).

Residue R23 is the Proton donor of the active site. The Mg(2+) site is built by N87, D103, D105, D107, D120, and E123.

It belongs to the Ntdp family. Mg(2+) serves as cofactor.

It carries out the reaction a ribonucleoside 5'-triphosphate + H2O = a ribonucleoside 5'-diphosphate + phosphate + H(+). The catalysed reaction is a ribonucleoside 5'-diphosphate + H2O = a ribonucleoside 5'-phosphate + phosphate + H(+). Has nucleoside phosphatase activity towards nucleoside triphosphates and nucleoside diphosphates. This chain is Nucleoside triphosphate/diphosphate phosphatase, found in Streptococcus uberis (strain ATCC BAA-854 / 0140J).